Consider the following 304-residue polypeptide: MELRHLRYFVAVVEEQSFTKAADKLCIAQPPLSRQIQNLEEELGIQLLERGSRPVKTTPEGHFFYQYAIKLLSNVDQMVSMTKRIASVEKTIRIGFVGSLLFGLLPRIIHLYRQAHPNLRIELYEMGTKAQTEALKEGRIDAGFGRLKISDPAIKRTLLRNERLMVAVHASHPLNQMKDKGVHLNDLIDEKILLYPSSPKPNFSTHVMNIFSDHGLEPTKINEVREVQLALGLVAAGEGISLVPASTQSIQLFNLSYVPLLDPDAITPIYIAVRNMEESTYIYSLYETIRQIYAYEGFTEPPNW.

The 58-residue stretch at 1–58 (MELRHLRYFVAVVEEQSFTKAADKLCIAQPPLSRQIQNLEEELGIQLLERGSRPVKTT) folds into the HTH lysR-type domain. The H-T-H motif DNA-binding region spans 18–37 (FTKAADKLCIAQPPLSRQIQ). Ser99 and Leu104 together coordinate benzoate. Residue Ser99 participates in cis,cis-muconate binding. Position 128 (Thr128) interacts with cis,cis-muconate. Residues Phe144, Arg160, and Asn202 each coordinate benzoate. Phe203 provides a ligand contact to cis,cis-muconate. Tyr293 serves as a coordination point for benzoate.

Belongs to the LysR transcriptional regulatory family. In terms of assembly, homotetramer; dimer of dimers. The dimers can also associate to form linear, higher oligomers (in vitro).

Its function is as follows. Positive regulator of the ben and cat genes for benzoate degradation. BenM is necessary for ben gene expression but not for expression of the cat genes, which can be regulated by CatM. Binds to the inducers cis,cis-muconate and benzoate. The polypeptide is HTH-type transcriptional regulator BenM (benM) (Acinetobacter baylyi (strain ATCC 33305 / BD413 / ADP1)).